The sequence spans 296 residues: Ribosomal RNA small subunit methyltransferase A (296 aa).

Positions 32, 34, 59, 80, 105, and 130 each coordinate S-adenosyl-L-methionine.

It belongs to the class I-like SAM-binding methyltransferase superfamily. rRNA adenine N(6)-methyltransferase family. RsmA subfamily.

It is found in the cytoplasm. It carries out the reaction adenosine(1518)/adenosine(1519) in 16S rRNA + 4 S-adenosyl-L-methionine = N(6)-dimethyladenosine(1518)/N(6)-dimethyladenosine(1519) in 16S rRNA + 4 S-adenosyl-L-homocysteine + 4 H(+). Specifically dimethylates two adjacent adenosines (A1518 and A1519) in the loop of a conserved hairpin near the 3'-end of 16S rRNA in the 30S particle. May play a critical role in biogenesis of 30S subunits. The sequence is that of Ribosomal RNA small subunit methyltransferase A from Ligilactobacillus salivarius (strain UCC118) (Lactobacillus salivarius).